We begin with the raw amino-acid sequence, 1178 residues long: Mitosis inhibitor protein kinase SWE1 (1178 aa).

The segment covering 1–35 (MDSNPCQDVSGDTSSTPMANNNPTNDSTISSQNHS) has biased composition (polar residues). Disordered regions lie at residues 1 to 61 (MDSN…HSQQ), 188 to 209 (NSQI…SSSM), 288 to 336 (SNNQ…SKGF), 378 to 434 (PTHT…SSNI), 451 to 473 (NHAR…TNIS), 524 to 543 (KNSI…PIKR), 584 to 606 (QRFP…QHHD), and 721 to 754 (KREI…GDDP). A compositionally biased stretch (basic residues) spans 37 to 55 (IGLRKHQQQHYHQHSHSQM). Over residues 299–308 (VSQSPSPSSK) the composition is skewed to polar residues. Positions 388 to 413 (SSLNPPSSSTSNSTTAAITSTSPPAN) are enriched in low complexity. Positions 591–601 (NPNTTTNNNNT) are enriched in low complexity. The Protein kinase domain occupies 791–1154 (MKNIKYIGSG…ACNILEMPEC (364 aa)). ATP is bound by residues 797–805 (IGSGAFSIA) and K818. Residue D929 is the Proton acceptor of the active site. The Mg(2+) site is built by N934 and D947. Residues 1034–1068 (HNPNTNSNISGSGSRSGSGSTGGNGSAGDGSTNST) are disordered. A compositionally biased stretch (low complexity) spans 1037 to 1046 (NTNSNISGSG). A compositionally biased stretch (gly residues) spans 1047–1061 (SRSGSGSTGGNGSAG).

The protein belongs to the protein kinase superfamily. Ser/Thr protein kinase family. WEE1 subfamily. In terms of processing, phosphorylated.

It localises to the bud neck. The protein localises to the nucleus. It carries out the reaction L-seryl-[protein] + ATP = O-phospho-L-seryl-[protein] + ADP + H(+). The enzyme catalyses L-threonyl-[protein] + ATP = O-phospho-L-threonyl-[protein] + ADP + H(+). Functionally, protein kinase that acts as a negative regulator of entry into mitosis (G2 to M transition) by phosphorylating and inhibiting the mitosis-promoting cyclin B-bound CDC28 at 'Tyr-18'. SWE1-mediated inhibition of CDC28 acts in a cell size or morphogenesis checkpoint to delay mitosis in response to defects in growth, actin organization or bud formation. Plays an important role in filamentous growth. The polypeptide is Mitosis inhibitor protein kinase SWE1 (SWE1) (Candida albicans (strain SC5314 / ATCC MYA-2876) (Yeast)).